We begin with the raw amino-acid sequence, 117 residues long: Large ribosomal subunit protein uL18 (117 aa).

It belongs to the universal ribosomal protein uL18 family. Part of the 50S ribosomal subunit; part of the 5S rRNA/L5/L18/L25 subcomplex. Contacts the 5S and 23S rRNAs.

This is one of the proteins that bind and probably mediate the attachment of the 5S RNA into the large ribosomal subunit, where it forms part of the central protuberance. The protein is Large ribosomal subunit protein uL18 of Francisella philomiragia subsp. philomiragia (strain ATCC 25017 / CCUG 19701 / FSC 153 / O#319-036).